The primary structure comprises 322 residues: Follistatin-A (322 aa).

The N-terminal stretch at 1–32 is a signal peptide; the sequence is MLRMLKRQQLHPGMILLLFWLCYLIEDQKVQA. Residues 33 to 106 enclose the TB domain; it reads GNCWLQQGKN…TCDNVDCGPG (74 aa). Intrachain disulfides connect C35–C58, C45–C91, C59–C94, C98–C109, C103–C119, C121–C153, C125–C146, and C135–C167. N75 carries N-linked (GlcNAc...) asparagine glycosylation. One can recognise a Follistatin-like 1 domain in the interval 97 to 120; it reads TCDNVDCGPGKRCKMNRRSKPRCV. 3 consecutive Kazal-like domains span residues 103 to 169, 189 to 244, and 267 to 321; these read CGPG…KCKK, NAYC…KCIK, and RGRC…SCNC. N-linked (GlcNAc...) asparagine glycosylation occurs at N127. In terms of domain architecture, Follistatin-like 2 spans 170-193; that stretch reads TCRDVLCPGSSTCVVDQTNNAYCV. 3 disulfides stabilise this stretch: C195-C228, C199-C221, and C210-C242. A Follistatin-like 3 domain is found at 247 to 271; that stretch reads SCDDIHCSAGKKCLWDAKMSRGRCA. 3 cysteine pairs are disulfide-bonded: C273–C305, C277–C298, and C287–C319. A glycan (N-linked (GlcNAc...) asparagine) is linked at N291.

Monomer. In terms of tissue distribution, not expressed in the organizer region. Expression in gastrulating embryos is confined to anterior and paraxial regions, which give rise to head mesoderm and the first five somites. In addition, expressed transiently in a subset of cells in the posterior notochord anlage. Later, expression is seen in brain, eyes and somites.

Functionally, binds directly to activin and functions as an activin antagonist. Specific inhibitor of the biosynthesis and secretion of pituitary follicle stimulating hormone (fsh). Inhibits bmp-signaling during later stages of development including late phases of dorsoventral patterning, to refine the early pattern set up by the interaction of chordino and bmp2/4. Not involved in organizer function or early phases of dorsoventral pattern formation. This is Follistatin-A (fsta) from Danio rerio (Zebrafish).